A 139-amino-acid chain; its full sequence is uncharacterized protein (139 aa).

The interval 1 to 26 is disordered; that stretch reads MQLVREKRGAHQHVPRKTTEPQKVRG. The span at 17-26 shows a compositional bias: basic and acidic residues; sequence KTTEPQKVRG.

This is an uncharacterized protein from Ictalurid herpesvirus 1 (strain Auburn) (IcHV-1).